The following is a 94-amino-acid chain: Large ribosomal subunit protein bL27 (94 aa).

The propeptide occupies 1 to 9 (MLELNLQLF). The tract at residues 12 to 33 (KKGGGSTSNGRDSQAKRLGAKA) is disordered.

This sequence belongs to the bacterial ribosomal protein bL27 family. Post-translationally, the N-terminus is cleaved by ribosomal processing cysteine protease Prp.

This Lactococcus lactis subsp. lactis (strain IL1403) (Streptococcus lactis) protein is Large ribosomal subunit protein bL27.